The chain runs to 300 residues: ATP synthase gamma chain (300 aa).

This sequence belongs to the ATPase gamma chain family. As to quaternary structure, F-type ATPases have 2 components, CF(1) - the catalytic core - and CF(0) - the membrane proton channel. CF(1) has five subunits: alpha(3), beta(3), gamma(1), delta(1), epsilon(1). CF(0) has three main subunits: a, b and c.

Its subcellular location is the cell membrane. Its function is as follows. Produces ATP from ADP in the presence of a proton gradient across the membrane. The gamma chain is believed to be important in regulating ATPase activity and the flow of protons through the CF(0) complex. In Acidothermus cellulolyticus (strain ATCC 43068 / DSM 8971 / 11B), this protein is ATP synthase gamma chain.